A 140-amino-acid polypeptide reads, in one-letter code: MAKKVVAVVKIQLPAGKATPAPPVGTALGPHGVNIMAFCKEFNERTAKDAGLIIPVVITIYSDRSFSFITKTPPASVLLKKAAGIESGSPQPNKQKVGKITKQQLREIAEIKMRDLNTTDIEAAMRMIAGTARSMGIEIV.

It belongs to the universal ribosomal protein uL11 family. As to quaternary structure, part of the ribosomal stalk of the 50S ribosomal subunit. Interacts with L10 and the large rRNA to form the base of the stalk. L10 forms an elongated spine to which L12 dimers bind in a sequential fashion forming a multimeric L10(L12)X complex. One or more lysine residues are methylated.

Functionally, forms part of the ribosomal stalk which helps the ribosome interact with GTP-bound translation factors. In Caldanaerobacter subterraneus subsp. tengcongensis (strain DSM 15242 / JCM 11007 / NBRC 100824 / MB4) (Thermoanaerobacter tengcongensis), this protein is Large ribosomal subunit protein uL11.